The following is a 462-amino-acid chain: tRNA modification GTPase MnmE (462 aa).

(6S)-5-formyl-5,6,7,8-tetrahydrofolate contacts are provided by arginine 23, glutamate 86, and lysine 125. A TrmE-type G domain is found at 221-384; that stretch reads GIPVAIVGEP…LKNQLLSFVN (164 aa). Asparagine 231 serves as a coordination point for K(+). GTP-binding positions include 231 to 236, 250 to 256, and 275 to 278; these read NVGKST, SEIAGTT, and DTAG. Serine 235 contributes to the Mg(2+) binding site. Serine 250, isoleucine 252, and threonine 255 together coordinate K(+). Threonine 256 contributes to the Mg(2+) binding site. Lysine 462 is a binding site for (6S)-5-formyl-5,6,7,8-tetrahydrofolate.

Belongs to the TRAFAC class TrmE-Era-EngA-EngB-Septin-like GTPase superfamily. TrmE GTPase family. As to quaternary structure, homodimer. Heterotetramer of two MnmE and two MnmG subunits. K(+) serves as cofactor.

It localises to the cytoplasm. Exhibits a very high intrinsic GTPase hydrolysis rate. Involved in the addition of a carboxymethylaminomethyl (cmnm) group at the wobble position (U34) of certain tRNAs, forming tRNA-cmnm(5)s(2)U34. In Flavobacterium psychrophilum (strain ATCC 49511 / DSM 21280 / CIP 103535 / JIP02/86), this protein is tRNA modification GTPase MnmE.